Consider the following 1165-residue polypeptide: uncharacterized protein (1165 aa).

The segment at 422 to 442 is disordered; it reads EAAPPRPPRKSKAPEPTGDKA.

This is an uncharacterized protein from Frog virus 3 (isolate Goorha) (FV-3).